Here is a 638-residue protein sequence, read N- to C-terminus: Chaperone protein HtpG (638 aa).

The segment at 1–328 (MGDVEELKFS…SSDLPLNISR (328 aa)) is a; substrate-binding. The segment at 329 to 558 (ETLQNNMVIE…EHALDIRMER (230 aa)) is b. The interval 484 to 508 (LEKFTEGDDQQSTKKKKEKKDTDDA) is disordered. The tract at residues 559–638 (FLREQKQLSY…NQVLARLFKK (80 aa)) is c.

This sequence belongs to the heat shock protein 90 family. In terms of assembly, homodimer.

It localises to the cytoplasm. Functionally, molecular chaperone. Has ATPase activity. The polypeptide is Chaperone protein HtpG (Anaplasma marginale (strain St. Maries)).